Consider the following 373-residue polypeptide: Centrosomal protein of 41 kDa (373 aa).

Residues 89–137 are disordered; that stretch reads QRLEDNDSAASDPDAETTARTNGKGNPGEQSPSPEQFINNAGAGDSSRS. A phosphoserine mark is found at S96 and S99. The segment covering 106-127 has biased composition (polar residues); that stretch reads TARTNGKGNPGEQSPSPEQFIN. Residue T109 is modified to Phosphothreonine. The residue at position 121 (S121) is a Phosphoserine. Residues 169-266 form the Rhodanese domain; the sequence is PDCPFLLLDV…LAQKFPEGLI (98 aa). Residues 275 to 373 are disordered; sequence QQALPPGSAR…SGHLQGKPWK (99 aa). Positions 298–312 are enriched in basic and acidic residues; that stretch reads NKWRFTPEDLKKIEY. Position 343 is an omega-N-methylarginine (R343). A compositionally biased stretch (polar residues) spans 355–366; sequence SHSNPRSLSSGH.

This sequence belongs to the CEP41 family. Found in a complex with TTLL6. In terms of tissue distribution, expressed in testis and fetal tissues.

The protein resides in the cytoplasm. Its subcellular location is the cytoskeleton. The protein localises to the microtubule organizing center. It localises to the centrosome. It is found in the cell projection. The protein resides in the cilium. Its subcellular location is the cilium basal body. Functionally, required during ciliogenesis for tubulin glutamylation in cilium. Probably acts by participating in the transport of TTLL6, a tubulin polyglutamylase, between the basal body and the cilium. In Homo sapiens (Human), this protein is Centrosomal protein of 41 kDa (CEP41).